The primary structure comprises 394 residues: Probable purine permease 23 (394 aa).

Residues 1–20 (MEMTEASKHTTTHEESEHVQ) are compositionally biased toward basic and acidic residues. The interval 1-24 (MEMTEASKHTTTHEESEHVQNPEP) is disordered. At Ser-29 the chain carries Phosphoserine. 10 helical membrane-spanning segments follow: residues 43–63 (ISVL…ILLL), 85–105 (WMQA…FFIF), 124–144 (LILL…LYAL), 152–172 (GFFM…TAII), 180–200 (WIII…PVFS), 211–231 (GIQA…LCLV), 254–274 (VLEM…VGLF), 301–321 (VGLA…VLYV), 328–348 (IVHM…FDFI), and 352–372 (FSWP…SYFY).

Belongs to the purine permeases (TC 2.A.7.14) family.

The protein resides in the membrane. In Arabidopsis thaliana (Mouse-ear cress), this protein is Probable purine permease 23 (PUP23).